We begin with the raw amino-acid sequence, 576 residues long: Low-affinity glucose transporter HXT4 (576 aa).

The tract at residues 1–56 is disordered; it reads MSEEAAYQEDTAVQNTPADALSPVESDSNSALSTPSNKAERDDMKDFDENHEESNN. Residues 1-66 are Cytoplasmic-facing; it reads MSEEAAYQED…YVEIPKKPAS (66 aa). Residues 25-37 show a composition bias toward polar residues; that stretch reads ESDSNSALSTPSN. Positions 38 to 54 are enriched in basic and acidic residues; it reads KAERDDMKDFDENHEES. Residue Lys45 forms a Glycyl lysine isopeptide (Lys-Gly) (interchain with G-Cter in ubiquitin) linkage. Residues 67–87 form a helical membrane-spanning segment; that stretch reads AYVTVSICCLMVAFGGFVFGW. Residues 88-122 lie on the Extracellular side of the membrane; it reads DTGTISGFVAQTDFIRRFGMKHHDGTYYLSKVRTG. The helical transmembrane segment at 123-143 threads the bilayer; that stretch reads LIVSIFNIGCAIGGIILAKLG. The Cytoplasmic portion of the chain corresponds to 144–149; that stretch reads DMYGRK. A helical membrane pass occupies residues 150-170; it reads MGLIVVVVIYIIGIIIQIASI. The Extracellular segment spans residues 171–180; the sequence is NKWYQYFIGR. A helical transmembrane segment spans residues 181 to 201; that stretch reads IISGLGVGGIAVLSPMLISEV. Residues 202–207 lie on the Cytoplasmic side of the membrane; that stretch reads SPKHIR. The helical transmembrane segment at 208 to 228 threads the bilayer; the sequence is GTLVSCYQLMITLGIFLGYCT. Over 229–242 the chain is Extracellular; that stretch reads NYGTKTYTNSVQWR. The helical transmembrane segment at 243 to 263 threads the bilayer; it reads VPLGLGFAWALFMIGGMTFVP. Residues 264–346 lie on the Cytoplasmic side of the membrane; sequence ESPRYLVEVG…IQSLQQLTGD (83 aa). The helical transmembrane segment at 347–363 threads the bilayer; that stretch reads NYFFYYGTTVFTAVGLE. Residues 364-369 lie on the Extracellular side of the membrane; it reads DSFETS. Residues 370-387 form a helical membrane-spanning segment; that stretch reads IVLGIVNFASTFVGIFLV. Over 388 to 394 the chain is Cytoplasmic; the sequence is ERYGRRR. Residues 395 to 415 form a helical membrane-spanning segment; it reads CLLWGAASMTACMVVFASVGV. Residues 416–437 are Extracellular-facing; sequence TRLWPNGKKNGSSKGAGNCMIV. Residue Asn425 is glycosylated (N-linked (GlcNAc...) asparagine). Residues 438-458 traverse the membrane as a helical segment; it reads FTCFYLFCFATTWAPIPFVVN. Topologically, residues 459–475 are cytoplasmic; that stretch reads SETFPLRVKSKCMAIAQ. The chain crosses the membrane as a helical span at residues 476–496; it reads ACNWIWGFLIGFFTPFISGAI. Asp497 is a topological domain (extracellular). Residues 498–518 traverse the membrane as a helical segment; sequence FYYGYVFMGCLVFSYFYVFFF. The Cytoplasmic portion of the chain corresponds to 519–576; that stretch reads VPETKGLTLEEVNTLWEEGVLPWKSPSWVPPNKRGTDYNADDLMHDDQPFYKKMFGKK.

Belongs to the major facilitator superfamily. Sugar transporter (TC 2.A.1.1) family.

Its subcellular location is the cell membrane. Xylose uptake is strongly inhibited by glucose. Its function is as follows. Low-affinity glucose transporter. Can also transport xylose. The chain is Low-affinity glucose transporter HXT4 (HXT4) from Saccharomyces cerevisiae (strain ATCC 204508 / S288c) (Baker's yeast).